Reading from the N-terminus, the 352-residue chain is MSLSQESGAHHDPQDYPVVSDEEDEIDILGEDDSCSLKSHFYLQPTHSEMGDSGILSPSKLSCTESESDSSGESEGGTSKDSPATPSGGKAKRALVKPPYSYIALITMAILQSPHKKLTLSGICDFISSKFPYYKDKFPAWQNSIRHNLSLNDCFIKIPREPGNPGKGNYWTLDPASEDMFDNGSFLRRRKRFKRHQQEFFKDGLVMYNPLPYYRPYSTIQPQQVLQQTPVACMAIPENLTMPTHLAPYPDIKRKVPYPDQGVHRGFEALDADNHPNKSQSKCSFSIENIMRKPKEPEPSFSTFNPHWNYNHLLQRPNSCLLPAVLNLSTGPLLSNAQGTRQYNLIKFPGCY.

Disordered regions lie at residues 1 to 32 and 47 to 92; these read MSLS…LGED and HSEM…GKAK. Over residues 20–32 the composition is skewed to acidic residues; the sequence is SDEEDEIDILGED. Positions 73-82 are enriched in low complexity; sequence ESEGGTSKDS. The fork-head DNA-binding region spans 97 to 191; it reads KPPYSYIALI…DNGSFLRRRK (95 aa).

As to expression, expression begins in the newly forming dorsal mesoderm and is maintained during gastrulation at the dorsal blastopore lip (Spemann organizer). At the early neurula stages, expressed in a row of cells along the dorsal midline that are destined to become the fllor plate of the neural tube. At late neurula, expressed within the anterior and posterior poles of the embryo. After neural closure, expression is detected only in the tailtip, the otic vesicle and at the midbrain/hindbrain boundary.

It localises to the nucleus. In terms of biological role, transcriptional repressor. The chain is Forkhead box protein D5 from Xenopus tropicalis (Western clawed frog).